Consider the following 379-residue polypeptide: Cytochrome b (379 aa).

4 helical membrane-spanning segments follow: residues 33–53 (FGSL…FLAM), 77–98 (WLIR…FIHV), 113–133 (WNIG…GYVL), and 178–198 (FFAF…VHLL). Residues H83 and H97 each coordinate heme b. Heme b contacts are provided by H182 and H196. H201 provides a ligand contact to a ubiquinone. 4 helical membrane-spanning segments follow: residues 226–246 (TKDL…ALFF), 288–308 (LGGV…PLLN), 320–340 (VTQV…WIGG), and 347–367 (FTTI…ILIP).

Belongs to the cytochrome b family. As to quaternary structure, the cytochrome bc1 complex contains 11 subunits: 3 respiratory subunits (MT-CYB, CYC1 and UQCRFS1), 2 core proteins (UQCRC1 and UQCRC2) and 6 low-molecular weight proteins (UQCRH/QCR6, UQCRB/QCR7, UQCRQ/QCR8, UQCR10/QCR9, UQCR11/QCR10 and a cleavage product of UQCRFS1). This cytochrome bc1 complex then forms a dimer. Heme b serves as cofactor.

The protein resides in the mitochondrion inner membrane. Functionally, component of the ubiquinol-cytochrome c reductase complex (complex III or cytochrome b-c1 complex) that is part of the mitochondrial respiratory chain. The b-c1 complex mediates electron transfer from ubiquinol to cytochrome c. Contributes to the generation of a proton gradient across the mitochondrial membrane that is then used for ATP synthesis. In Akodon montensis (Montane grass mouse), this protein is Cytochrome b (MT-CYB).